Consider the following 127-residue polypeptide: UPF0102 protein SYNAS_23220 (127 aa).

This sequence belongs to the UPF0102 family.

This Syntrophus aciditrophicus (strain SB) protein is UPF0102 protein SYNAS_23220.